An 87-amino-acid polypeptide reads, in one-letter code: U3-theraphotoxin-Hhn1g (87 aa).

A signal peptide spans 1–24 (MVNMKASMFLTFAGLVLLFVVCFA). Residues 25 to 52 (SESEEKEFPKEMLSSIFAVDNDFKQEER) constitute a propeptide that is removed on maturation. Disulfide bonds link C54–C67, C61–C72, and C66–C79.

This sequence belongs to the neurotoxin 10 (Hwtx-1) family. 51 (Hntx-8) subfamily. Hntx-8 sub-subfamily. Expressed by the venom gland.

It localises to the secreted. In terms of biological role, ion channel inhibitor. This is U3-theraphotoxin-Hhn1g from Cyriopagopus hainanus (Chinese bird spider).